The primary structure comprises 173 residues: Adenine phosphoribosyltransferase (173 aa).

It belongs to the purine/pyrimidine phosphoribosyltransferase family. As to quaternary structure, homodimer.

The protein localises to the cytoplasm. The enzyme catalyses AMP + diphosphate = 5-phospho-alpha-D-ribose 1-diphosphate + adenine. The protein operates within purine metabolism; AMP biosynthesis via salvage pathway; AMP from adenine: step 1/1. Catalyzes a salvage reaction resulting in the formation of AMP, that is energically less costly than de novo synthesis. The chain is Adenine phosphoribosyltransferase from Macrococcus caseolyticus (strain JCSC5402) (Macrococcoides caseolyticum).